The primary structure comprises 493 residues: 3-octaprenyl-4-hydroxybenzoate carboxy-lyase (493 aa).

Residue Asn-172 participates in Mn(2+) binding. Prenylated FMN-binding positions include 175–177 (IYR), 189–191 (RWL), and 194–195 (RG). Glu-238 is a binding site for Mn(2+). The active-site Proton donor is the Asp-287.

This sequence belongs to the UbiD family. As to quaternary structure, homohexamer. The cofactor is prenylated FMN. It depends on Mn(2+) as a cofactor.

The protein localises to the cell membrane. It catalyses the reaction a 4-hydroxy-3-(all-trans-polyprenyl)benzoate + H(+) = a 2-(all-trans-polyprenyl)phenol + CO2. It participates in cofactor biosynthesis; ubiquinone biosynthesis. Its function is as follows. Catalyzes the decarboxylation of 3-octaprenyl-4-hydroxy benzoate to 2-octaprenylphenol, an intermediate step in ubiquinone biosynthesis. In Shewanella frigidimarina (strain NCIMB 400), this protein is 3-octaprenyl-4-hydroxybenzoate carboxy-lyase.